The chain runs to 122 residues: Large ribosomal subunit protein uL18 (122 aa).

It belongs to the universal ribosomal protein uL18 family. As to quaternary structure, part of the 50S ribosomal subunit; part of the 5S rRNA/L5/L18/L25 subcomplex. Contacts the 5S and 23S rRNAs.

In terms of biological role, this is one of the proteins that bind and probably mediate the attachment of the 5S RNA into the large ribosomal subunit, where it forms part of the central protuberance. This chain is Large ribosomal subunit protein uL18, found in Dictyoglomus thermophilum (strain ATCC 35947 / DSM 3960 / H-6-12).